The following is a 546-amino-acid chain: Probable ATP-dependent RNA helicase DDX56 (546 aa).

Positions Leu-7–Glu-35 match the Q motif motif. In terms of domain architecture, Helicase ATP-binding spans Ile-38–Leu-218. Ala-51–Thr-58 contributes to the ATP binding site. Position 126 is a phosphoserine (Ser-126). At Thr-141 the chain carries Phosphothreonine. Positions Asp-166–Asp-169 match the DEAD box motif. The Helicase C-terminal domain maps to Gln-230–Glu-424. 2 disordered regions span residues Val-324 to Gly-344 and Arg-508 to Ser-546. Composition is skewed to basic residues over residues Lys-325 to Lys-334, Arg-508 to Lys-524, and Phe-532 to Ser-546.

It belongs to the DEAD box helicase family. DDX56/DBP9 subfamily. May form homooligomeric complexes. Interacts with IRF3. Interacts with OCT4 and POU5F1.

It is found in the nucleus. The protein resides in the nucleolus. The enzyme catalyses ATP + H2O = ADP + phosphate + H(+). Its function is as follows. Nucleolar RNA helicase that plays a role in various biological processes including innate immunity, ribosome biogenesis or nucleolus organization. Plays an essential role in maintaining nucleolar integrity in planarian stem cells. Maintains embryonic stem cells proliferation by conventional regulation of ribosome assembly and interaction with OCT4 and POU5F1 complex. Regulates antiviral innate immunity by inhibiting the virus-triggered signaling nuclear translocation of IRF3. Mechanistically, acts by disrupting the interaction between IRF3 and importin IPO5. May play a role in later stages of the processing of the pre-ribosomal particles leading to mature 60S ribosomal subunits. Has intrinsic ATPase activity. This Mus musculus (Mouse) protein is Probable ATP-dependent RNA helicase DDX56 (Ddx56).